A 354-amino-acid chain; its full sequence is 5,10-methenyltetrahydromethanopterin hydrogenase (354 aa).

The protein belongs to the HMD family.

The catalysed reaction is 5,10-methenyl-5,6,7,8-tetrahydromethanopterin + H2 = 5,10-methylenetetrahydromethanopterin + H(+). Its pathway is one-carbon metabolism; methanogenesis from CO(2); 5,10-methylene-5,6,7,8-tetrahydromethanopterin from 5,10-methenyl-5,6,7,8-tetrahydromethanopterin (hydrogen route): step 1/1. Catalyzes the reversible reduction of methenyl-H(4)MPT(+) to methylene-H(4)MPT. In Methanococcus maripaludis (strain DSM 14266 / JCM 13030 / NBRC 101832 / S2 / LL), this protein is 5,10-methenyltetrahydromethanopterin hydrogenase.